The following is a 229-amino-acid chain: Flagellar L-ring protein (229 aa).

An N-terminal signal peptide occupies residues 1–23 (MSPLTRIALALAASAALVLALTA). The N-palmitoyl cysteine moiety is linked to residue Cys-24. Cys-24 carries the S-diacylglycerol cysteine lipid modification.

Belongs to the FlgH family. In terms of assembly, the basal body constitutes a major portion of the flagellar organelle and consists of four rings (L,P,S, and M) mounted on a central rod.

It is found in the cell outer membrane. It localises to the bacterial flagellum basal body. Functionally, assembles around the rod to form the L-ring and probably protects the motor/basal body from shearing forces during rotation. The protein is Flagellar L-ring protein of Anaeromyxobacter dehalogenans (strain 2CP-C).